A 228-amino-acid chain; its full sequence is Urease accessory protein UreH (228 aa).

Helical transmembrane passes span 48 to 68 (VFWG…IILM), 79 to 99 (SLEF…ILSL), 130 to 150 (LFIG…LTMS), 162 to 182 (ILFF…LIGI), and 196 to 216 (AFIQ…MYNL).

Belongs to the NiCoT transporter (TC 2.A.52) family.

It localises to the cell membrane. Probably facilitates nickel incorporation. May constitute a multicomponent high-affinity nickel transporter. Not essential for the expression of catalytically active urease. The polypeptide is Urease accessory protein UreH (ureH) (Bacillus sp. (strain TB-90)).